Consider the following 596-residue polypeptide: Elongation factor 4 (596 aa).

A tr-type G domain is found at 2–184 (KHIRNFSIIA…MIVKDVPPPV (183 aa)). GTP contacts are provided by residues 14–19 (DHGKST) and 131–134 (NKID).

It belongs to the TRAFAC class translation factor GTPase superfamily. Classic translation factor GTPase family. LepA subfamily.

The protein resides in the cell inner membrane. The catalysed reaction is GTP + H2O = GDP + phosphate + H(+). In terms of biological role, required for accurate and efficient protein synthesis under certain stress conditions. May act as a fidelity factor of the translation reaction, by catalyzing a one-codon backward translocation of tRNAs on improperly translocated ribosomes. Back-translocation proceeds from a post-translocation (POST) complex to a pre-translocation (PRE) complex, thus giving elongation factor G a second chance to translocate the tRNAs correctly. Binds to ribosomes in a GTP-dependent manner. In Pseudoalteromonas translucida (strain TAC 125), this protein is Elongation factor 4.